Consider the following 562-residue polypeptide: Non-homologous end joining factor IFFO1 (562 aa).

Residues 65–116 (ALRNDLGSNINVLKTLNLRFRCFLAKVHELERRNRLLEKQLQQALEEGKQGR) are LMNA binding. Residues 73-529 (NINVLKTLNL…RLITQSGDRK (457 aa)) enclose the IF rod domain. The stretch at 85-117 (RCFLAKVHELERRNRLLEKQLQQALEEGKQGRR) forms a coiled coil. Residues 154-187 (RVLGSPSRSPAGPLASSAACHTSSSTSTSTAFSS) form a disordered region. The segment covering 168–187 (ASSAACHTSSSTSTSTAFSS) has biased composition (low complexity). Residues 237–301 (EIRALYNVLA…MKVEQLKAEL (65 aa)) adopt a coiled-coil conformation. The segment at 364 to 401 (MGGRKRERKAAVEEDTSLSESDGPRQPEGAEEESTALS) is disordered. An XCCR4 binding. Required for localization to the double-strand breaks (DSBs) region spans residues 453-528 (EQEDSLEKVI…RRLITQSGDR (76 aa)). Residues 458–504 (LEKVIKDTESLFKTREKEYQETIDQIELELATAKNDMNRHLHEYMEM) adopt a coiled-coil conformation. A disordered region spans residues 523–562 (TQSGDRKSPAFTAVPLSDPPPPPSETEDSDRDVSSDSSMR). Over residues 553–562 (RDVSSDSSMR) the composition is skewed to basic and acidic residues.

It belongs to the intermediate filament family. In terms of assembly, forms a heterotetramer with XRCC4. The interaction with XRCC4 is direct, involves LIG4-free XRCC4 and leads to relocalization of IFFO1 at the double-strand break (DSB) sites. Interacts with LMNA; the interaction forms an interior nucleoskeleton and the recruitment to DNA double-strand breaks.

The protein resides in the nucleus. It localises to the nucleoplasm. It is found in the nucleus inner membrane. Its subcellular location is the nucleus matrix. Functionally, nuclear matrix protein involved in the immobilization of broken DNA ends and the suppression of chromosome translocation during DNA double-strand breaks (DSBs). Interacts with the nuclear lamina component LMNA, resulting in the formation of a nucleoskeleton that will relocalize to the DSB sites in a XRCC4-dependent manner and promote the immobilization of the broken ends, thereby preventing chromosome translocation. Acts as a scaffold that allows the DNA repair protein XRCC4 and LMNA to assemble into a complex at the DSB sites. In Mus musculus (Mouse), this protein is Non-homologous end joining factor IFFO1.